A 471-amino-acid chain; its full sequence is Cell division protein FtsP (471 aa).

The tat-type signal signal peptide spans 1-27 (MSLSRRSFLQASGVALAAGALPLKAEA). A Plastocyanin-like domain is found at 229–288 (VRLRLLNASNARRYELSMTDNRAFHVVASDLGFLPAPMTVKRLSLGPGERREVLVDMSQG).

This sequence belongs to the FtsP family. In terms of processing, predicted to be exported by the Tat system. The position of the signal peptide cleavage has not been experimentally proven.

The protein resides in the periplasm. Functionally, cell division protein that is required for growth during stress conditions. May be involved in protecting or stabilizing the divisomal assembly under conditions of stress. This is Cell division protein FtsP from Rahnella sp. (strain Y9602).